A 60-amino-acid polypeptide reads, in one-letter code: Mastoparan-A (60 aa).

The signal sequence occupies residues 1–27 (MKNTILILFTAFIALLGFFGMSAEALA). AXPX repeat units lie at residues 27–30 (ADPI), 31–34 (ADPL), 35–38 (AGPN), and 41–43 (ADP). Positions 28–45 (DPIADPLAGPNAEADPEA) are excised as a propeptide. The residue at position 59 (Ile-59) is an Isoleucine amide.

The protein belongs to the MCD family. Mastoparan subfamily. In terms of tissue distribution, expressed by the venom gland.

It localises to the secreted. The protein resides in the target cell membrane. Its function is as follows. Antimicrobial and mast cell degranulating peptide. Has broad spectrum antibacterial activity against both Gram-positive and Gram-negative bacteria (S.aureus MIC=32-64 ug/ml, S.xylosus MIC=2 ug/ml, S.alactolyticus MIC=12 ug/ml, C.koseri MIC=4 ug/ml, E.coli MIC=8 ug/ml, K.pneumoniae MIC=32 ug/ml, P.aerugiosa MIC=192 ug/ml, S.choleraesuis MIC=32 ug/ml, S.typhimurium MIC=32 ug/ml, V.parahamelytics MIC=16 ug/ml). Affects membrane permeability of E.coli. Shows hemolytic activities on sheep, chicken and human erythrocytes. Its mast cell degranulation activity may be related to the activation of G-protein coupled receptors in mast cells as well as interaction with other proteins located in cell endosomal membranes in the mast cells. The chain is Mastoparan-A from Vespa analis (Yellow-vented hornet).